Consider the following 294-residue polypeptide: uncharacterized protein (294 aa).

The first 19 residues, 1–19 (MFKRSLFILLLLAASLVKA), serve as a signal peptide directing secretion.

This is an uncharacterized protein from Rickettsia felis (strain ATCC VR-1525 / URRWXCal2) (Rickettsia azadi).